Reading from the N-terminus, the 264-residue chain is Small ribosomal subunit protein uS2 (264 aa).

The protein belongs to the universal ribosomal protein uS2 family.

This Synechococcus sp. (strain JA-2-3B'a(2-13)) (Cyanobacteria bacterium Yellowstone B-Prime) protein is Small ribosomal subunit protein uS2.